The chain runs to 93 residues: UPF0147 protein PH1921.2 (93 aa).

It belongs to the UPF0147 family.

The protein is UPF0147 protein PH1921.2 of Pyrococcus horikoshii (strain ATCC 700860 / DSM 12428 / JCM 9974 / NBRC 100139 / OT-3).